The following is a 429-amino-acid chain: C4-dicarboxylate transport protein (429 aa).

A run of 8 helical transmembrane segments spans residues 3–23 (VSIF…GVLL), 44–64 (LIKM…IAGM), 76–96 (IALL…LVVV), 144–164 (AFAS…GFAL), 184–204 (VIFG…FGAM), 222–242 (LILC…GTIA), 331–351 (TLLV…GSGF), and 352–372 (IVLA…LALI).

It belongs to the dicarboxylate/amino acid:cation symporter (DAACS) (TC 2.A.23) family.

The protein resides in the cell inner membrane. Responsible for the transport of dicarboxylates such as succinate, fumarate, and malate from the periplasm across the membrane. This Yersinia pestis bv. Antiqua (strain Antiqua) protein is C4-dicarboxylate transport protein.